Here is a 446-residue protein sequence, read N- to C-terminus: Kynurenine 3-monooxygenase (446 aa).

This sequence belongs to the aromatic-ring hydroxylase family. KMO subfamily. The cofactor is FAD.

It catalyses the reaction L-kynurenine + NADPH + O2 + H(+) = 3-hydroxy-L-kynurenine + NADP(+) + H2O. It participates in cofactor biosynthesis; NAD(+) biosynthesis; quinolinate from L-kynurenine: step 1/3. Functionally, catalyzes the hydroxylation of L-kynurenine (L-Kyn) to form 3-hydroxy-L-kynurenine (L-3OHKyn). Required for synthesis of quinolinic acid. The polypeptide is Kynurenine 3-monooxygenase (Flavobacterium johnsoniae (strain ATCC 17061 / DSM 2064 / JCM 8514 / BCRC 14874 / CCUG 350202 / NBRC 14942 / NCIMB 11054 / UW101) (Cytophaga johnsonae)).